The chain runs to 461 residues: Alpha-L-fucosidase (461 aa).

A signal peptide spans 1–18; it reads MKMIIIFFILLILNLIKS.

The protein belongs to the glycosyl hydrolase 29 family.

The catalysed reaction is an alpha-L-fucoside + H2O = L-fucose + an alcohol. In terms of biological role, alpha-L-fucosidase is responsible for hydrolyzing the alpha-1,6-linked fucose joined to the reducing-end N-acetylglucosamine of the carbohydrate moieties of glycoproteins. The sequence is that of Alpha-L-fucosidase (alfA) from Dictyostelium discoideum (Social amoeba).